Consider the following 658-residue polypeptide: UvrABC system protein C (658 aa).

The GIY-YIG domain maps to 62-140 (PKPGVYRMLD…IKRFRPPYNV (79 aa)). One can recognise a UVR domain in the interval 250–285 (GAVQREIEAQMHKAAEDLDFERAAMLRDRLRAATFI).

The protein belongs to the UvrC family. Interacts with UvrB in an incision complex.

The protein resides in the cytoplasm. The UvrABC repair system catalyzes the recognition and processing of DNA lesions. UvrC both incises the 5' and 3' sides of the lesion. The N-terminal half is responsible for the 3' incision and the C-terminal half is responsible for the 5' incision. The sequence is that of UvrABC system protein C from Novosphingobium aromaticivorans (strain ATCC 700278 / DSM 12444 / CCUG 56034 / CIP 105152 / NBRC 16084 / F199).